The sequence spans 239 residues: Serine protease SplD (239 aa).

The first 36 residues, 1-36, serve as a signal peptide directing secretion; it reads MNKNIIIKSIAALTILTSITGVGTTVVDGIQQTAKA. Residues H75, D114, and S192 each act as charge relay system in the active site.

The protein belongs to the peptidase S1B family.

The protein resides in the secreted. The polypeptide is Serine protease SplD (splD) (Staphylococcus aureus (strain COL)).